A 307-amino-acid chain; its full sequence is 4-hydroxythreonine-4-phosphate dehydrogenase (307 aa).

Substrate-binding residues include His-126 and Thr-127. 3 residues coordinate a divalent metal cation: His-156, His-195, and His-251. Substrate contacts are provided by Lys-259, Asn-268, and Arg-277.

This sequence belongs to the PdxA family. In terms of assembly, homodimer. The cofactor is Zn(2+). Mg(2+) serves as cofactor. Co(2+) is required as a cofactor.

The protein localises to the cytoplasm. It carries out the reaction 4-(phosphooxy)-L-threonine + NAD(+) = 3-amino-2-oxopropyl phosphate + CO2 + NADH. It functions in the pathway cofactor biosynthesis; pyridoxine 5'-phosphate biosynthesis; pyridoxine 5'-phosphate from D-erythrose 4-phosphate: step 4/5. Its function is as follows. Catalyzes the NAD(P)-dependent oxidation of 4-(phosphooxy)-L-threonine (HTP) into 2-amino-3-oxo-4-(phosphooxy)butyric acid which spontaneously decarboxylates to form 3-amino-2-oxopropyl phosphate (AHAP). The sequence is that of 4-hydroxythreonine-4-phosphate dehydrogenase from Helicobacter pylori (strain ATCC 700392 / 26695) (Campylobacter pylori).